The chain runs to 285 residues: Ribosomal RNA small subunit methyltransferase I (285 aa).

It belongs to the methyltransferase superfamily. RsmI family.

It localises to the cytoplasm. It catalyses the reaction cytidine(1402) in 16S rRNA + S-adenosyl-L-methionine = 2'-O-methylcytidine(1402) in 16S rRNA + S-adenosyl-L-homocysteine + H(+). Its function is as follows. Catalyzes the 2'-O-methylation of the ribose of cytidine 1402 (C1402) in 16S rRNA. The chain is Ribosomal RNA small subunit methyltransferase I from Buchnera aphidicola subsp. Schizaphis graminum (strain Sg).